Reading from the N-terminus, the 261-residue chain is MVLNSNYDNYKNKITNSMKPLINSVNPAFSNQENPNSVILTTFNDFTNWARLSSLWPLLYGTSCCFIEFASLIGSRFDFDRYGLVPRSSPRQADLIITAGTVTMKMAPSLVRLYEQMPEPKYVIAMGACTITGGMFSTDSYSTVRGVDKLIPVDIYLPGCPPKPEAIIDAIIKLRKKIAQETYKDKSKFQQGNRYLTLNHKFHFVSNINTGQYNKQLDTKISNSQFNSTLDTFIPIKKNENLTFLLKNEDNKENIENKSKD.

[4Fe-4S] cluster contacts are provided by Cys-64, Cys-65, Cys-129, and Cys-160.

Belongs to the complex I 20 kDa subunit family. NDH is composed of at least 16 different subunits, 5 of which are encoded in the nucleus. [4Fe-4S] cluster serves as cofactor.

It localises to the plastid. Its subcellular location is the chloroplast thylakoid membrane. The catalysed reaction is a plastoquinone + NADH + (n+1) H(+)(in) = a plastoquinol + NAD(+) + n H(+)(out). It catalyses the reaction a plastoquinone + NADPH + (n+1) H(+)(in) = a plastoquinol + NADP(+) + n H(+)(out). Its function is as follows. NDH shuttles electrons from NAD(P)H:plastoquinone, via FMN and iron-sulfur (Fe-S) centers, to quinones in the photosynthetic chain and possibly in a chloroplast respiratory chain. The immediate electron acceptor for the enzyme in this species is believed to be plastoquinone. Couples the redox reaction to proton translocation, and thus conserves the redox energy in a proton gradient. The polypeptide is NAD(P)H-quinone oxidoreductase subunit K, chloroplastic (Physcomitrium patens (Spreading-leaved earth moss)).